The sequence spans 340 residues: Chitinase 7 (340 aa).

The N-terminal stretch at 1-32 is a signal peptide; that stretch reads MIAARAANLQVAMKALALAVLALAYAAATARA. Residues 33–73 enclose the Chitin-binding type-1 domain; that stretch reads EQCGRQAGGARCPNRLCCSRWGWCGLTDDYCKGGCQSQCRV. 7 cysteine pairs are disulfide-bonded: cysteine 35–cysteine 50, cysteine 44–cysteine 56, cysteine 49–cysteine 63, cysteine 67–cysteine 71, cysteine 118–cysteine 173, cysteine 185–cysteine 193, and cysteine 293–cysteine 323.

The protein belongs to the glycosyl hydrolase 19 family. Chitinase class I subfamily. Expressed in pistils, stamens and lodicules.

It carries out the reaction Random endo-hydrolysis of N-acetyl-beta-D-glucosaminide (1-&gt;4)-beta-linkages in chitin and chitodextrins.. In terms of biological role, hydrolyzes chitin and may play a role in defense against fungal pathogens containing chitin. In Oryza sativa subsp. indica (Rice), this protein is Chitinase 7 (Cht7).